A 227-amino-acid chain; its full sequence is Octanoyltransferase (227 aa).

Residues 35–222 (EAYENRIIMC…ELGRLLNEKK (188 aa)) form the BPL/LPL catalytic domain. Residues 80-87 (RGGDITYH), 152-154 (AIG), and 165-167 (GLA) contribute to the substrate site. Cys183 acts as the Acyl-thioester intermediate in catalysis.

The protein belongs to the LipB family.

The protein localises to the cytoplasm. It carries out the reaction octanoyl-[ACP] + L-lysyl-[protein] = N(6)-octanoyl-L-lysyl-[protein] + holo-[ACP] + H(+). The protein operates within protein modification; protein lipoylation via endogenous pathway; protein N(6)-(lipoyl)lysine from octanoyl-[acyl-carrier-protein]: step 1/2. In terms of biological role, catalyzes the transfer of endogenously produced octanoic acid from octanoyl-acyl-carrier-protein onto the lipoyl domains of lipoate-dependent enzymes. Lipoyl-ACP can also act as a substrate although octanoyl-ACP is likely to be the physiological substrate. The chain is Octanoyltransferase from Bacteroides thetaiotaomicron (strain ATCC 29148 / DSM 2079 / JCM 5827 / CCUG 10774 / NCTC 10582 / VPI-5482 / E50).